The sequence spans 612 residues: MALVSGAPLASRSCLNKSLISSTHELKPLRRTILPTLRWKSATPSINMCLTTSNSVDAVQRRIANHHSNLWDDDFIQSLSTPYEAPSYRERAERLIGEVKEMFESMGPNNDLLQRLSMVESVERLGIDRHFKNEIKSALDYVYSHWNEKGIGCGRDSVVSDLNSTALALRTLRLHGYPVSSDVLEHFKDQKGRFACSSIKTEGEIRSLLNLFRASLVAFPNEKVMEEAEIFSTTYLKEAVQKIPVSSLSRQIEYNMEYGWHTNLPRLEARNYMGDMIHEMSYMNAEKLLELAKLEFNIFHSLQERELKHLSRWWKDSGFSQLNFVRHRHVEYYTLASCIDIDPKHSAFRLGFAKMCHLITVLDDIYDTFGTMDELKLFTAAIKRWDPSATEWLPEYMKGVYMVVYETVNEMAGEAKKSQGRDTINYARQAWEAYIDSYMKEAEWISSGCLPTFEEYYENGKVSFGYQISVLQPILTLDVPLPHHILQEIIFPSRFNGLASGILRLKGDTRCYQADRARGEEASCISCYMNDNPGATEEDALNHIHAMVNELMKEFNWELLKPDNNVPVSSKKHAFDITRAVHHGYKYRDGYSVANNEIKNLVITTVLEPVPL.

The transit peptide at 1-52 directs the protein to the chloroplast; it reads MALVSGAPLASRSCLNKSLISSTHELKPLRRTILPTLRWKSATPSINMCLTT. Asp-363, Asp-367, and Asp-515 together coordinate Mg(2+). The DDXXD motif signature appears at 363-367; the sequence is DDIYD.

The protein belongs to the terpene synthase family. Tpsd subfamily. Mg(2+) is required as a cofactor. Requires Mn(2+) as cofactor.

The protein resides in the plastid. It is found in the chloroplast. The catalysed reaction is (2E)-geranyl diphosphate + H2O = 1,8-cineole + diphosphate. The protein operates within terpene metabolism; oleoresin biosynthesis. In terms of biological role, terpene synthase (TPS) involved in the biosynthesis of monoterpene natural products included in conifer oleoresin secretions and volatile emissions; these compounds contribute to biotic and abiotic stress defense against herbivores and pathogens. Catalyzes the conversion of (2E)-geranyl diphosphate (GPP) to 1,8-cineole. In Picea engelmannii x Picea glauca (Hybrid white spruce), this protein is 1,8-cineole synthase, chloroplastic.